Reading from the N-terminus, the 305-residue chain is Type II secretion system protein C (305 aa).

Over 1 to 29 the chain is Cytoplasmic; the sequence is MEFKQLPPLAAWPRLLSQNTLRWQKPISE. The helical transmembrane segment at 30–50 threads the bilayer; that stretch reads GLTLLLLVASAWTLGKMVWVV. The Periplasmic segment spans residues 51-305; that stretch reads SAEQTPVPTW…GQQHDVYIQF (255 aa).

Belongs to the GSP C family.

The protein resides in the cell inner membrane. In terms of biological role, involved in a type II secretion system (T2SS, formerly general secretion pathway, GSP) for the export of proteins. Required for secretion of cholera toxin through the outer membrane. This Vibrio cholerae serotype O1 (strain ATCC 39315 / El Tor Inaba N16961) protein is Type II secretion system protein C (epsC).